The chain runs to 91 residues: Thioredoxin (91 aa).

Positions 2 to 91 (SDSIVHVTDD…SRQSEVEATK (90 aa)) constitute a Thioredoxin domain. An intrachain disulfide couples Cys33 to Cys36.

Belongs to the thioredoxin family.

Participates in various redox reactions through the reversible oxidation of its active center dithiol to a disulfide and catalyzes dithiol-disulfide exchange reactions. The polypeptide is Thioredoxin (trxA) (Thiocapsa roseopersicina).